We begin with the raw amino-acid sequence, 3912 residues long: Chondramide synthase cmdD (3912 aa).

One can recognise a Carrier 1 domain in the interval A1411 to K1485. S1446 carries the post-translational modification O-(pantetheine 4'-phosphoryl)serine. Residues A1995–E2029 are compositionally biased toward acidic residues. Positions A1995–N2030 are disordered. The Carrier 2 domain occupies A2989–L3064. S3024 is modified (O-(pantetheine 4'-phosphoryl)serine).

The protein belongs to the ATP-dependent AMP-binding enzyme family. It depends on pantetheine 4'-phosphate as a cofactor.

In terms of biological role, involved in the synthesis of chondramides. Activates R-beta-tyrosine and probably phenylalanine. The protein is Chondramide synthase cmdD of Chondromyces crocatus.